The following is a 45-amino-acid chain: uncharacterized protein (45 aa).

This is an uncharacterized protein from Saccharomyces cerevisiae (strain ATCC 204508 / S288c) (Baker's yeast).